The chain runs to 295 residues: MLSIESLCKSYRHHEAVKNVSFHVNENECVALLGPNGAGKTTTLQMLAGLLSPTSGTIKLLGEKKLDRRLIGYLPQYPAFYSWMTANEFLTFAGRLSGLSKRKCQEKIGEMLEFVGLHEAAHKRIGGYSGGMKQRLGLAQALLHKPKFLILDEPVSALDPTGRFEVLDMMRELKKHMAVLFSTHVLHDAEQVCDQVVIMKNGEISWKGELQELKQQQQTNVFTLSVKEKLEGWLEEKPYVSAIVYKNPSQAVFELPDIHAGRSLLSDCIRKGLTVTRFEQKTESLEDVYLKVVHA.

Positions 2-226 (LSIESLCKSY…QQTNVFTLSV (225 aa)) constitute an ABC transporter domain. 34 to 41 (GPNGAGKT) provides a ligand contact to ATP.

Belongs to the ABC transporter superfamily.

This is an uncharacterized protein from Bacillus subtilis (strain 168).